The sequence spans 820 residues: Cell division control protein 48 homolog C (820 aa).

Disordered regions lie at residues 72-157 (RVKD…RFDL) and 169-188 (LNSS…VEVE). Over residues 76-87 (EDEDDNIGDEEG) the composition is skewed to acidic residues. Residues 85-122 (EEGSASQRKKQRRVDEKEEKLQRAEQSHLRKRNMERSV) are a coiled coil. Over residues 97-119 (RVDEKEEKLQRAEQSHLRKRNME) the composition is skewed to basic and acidic residues. Residues 121–142 (SVSSSPSSSSSSEDSGDVSTSE) show a composition bias toward low complexity. ATP is bound by residues 274-281 (GPPGCGKT) and 569-576 (GPPGCGKT).

The protein belongs to the AAA ATPase family.

It is found in the nucleus. The protein localises to the cytoplasm. It localises to the cytoskeleton. Its subcellular location is the phragmoplast. Probably functions in cell division and growth processes. Interacts with certain SNAREs as part of specialized membrane fusion events where vesicles from the same organelle fuse (homotypic fusion). The chain is Cell division control protein 48 homolog C (CDC48C) from Arabidopsis thaliana (Mouse-ear cress).